The chain runs to 338 residues: Anthranilate phosphoribosyltransferase (338 aa).

5-phospho-alpha-D-ribose 1-diphosphate-binding positions include G81, G84–D85, T89, N91–T94, K109–S117, and A121. G81 contacts anthranilate. Residue S93 participates in Mg(2+) binding. N112 provides a ligand contact to anthranilate. R167 lines the anthranilate pocket. The Mg(2+) site is built by D225 and E226.

Belongs to the anthranilate phosphoribosyltransferase family. As to quaternary structure, homodimer. Mg(2+) serves as cofactor.

It catalyses the reaction N-(5-phospho-beta-D-ribosyl)anthranilate + diphosphate = 5-phospho-alpha-D-ribose 1-diphosphate + anthranilate. Its pathway is amino-acid biosynthesis; L-tryptophan biosynthesis; L-tryptophan from chorismate: step 2/5. Catalyzes the transfer of the phosphoribosyl group of 5-phosphorylribose-1-pyrophosphate (PRPP) to anthranilate to yield N-(5'-phosphoribosyl)-anthranilate (PRA). The protein is Anthranilate phosphoribosyltransferase of Rhizobium etli (strain CIAT 652).